We begin with the raw amino-acid sequence, 167 residues long: Centrin-3 (167 aa).

EF-hand domains lie at 25 to 60, 61 to 96, 98 to 133, and 134 to 167; these read EQKQ…LGFD, VKKA…WILE, DPHE…LGEN, and MSDE…TGDI. Positions 38, 40, 42, and 49 each coordinate Ca(2+). Phosphoserine is present on Ser135. The Ca(2+) site is built by Asp147, Asp149, Asp151, Glu153, and Glu158.

Belongs to the centrin family. As to quaternary structure, monomer. Component of the TREX-2 complex (transcription and export complex 2), composed of at least ENY2, GANP, PCID2, SEM1, and either centrin CETN2 or CETN3. Interacts with USP49.

It localises to the cytoplasm. The protein resides in the cytoskeleton. The protein localises to the microtubule organizing center. It is found in the centrosome. Its subcellular location is the nucleus. It localises to the nucleolus. The protein resides in the nucleus envelope. The protein localises to the nuclear pore complex. It is found in the centriole. Its function is as follows. Plays a fundamental role in microtubule-organizing center structure and function. As a component of the TREX-2 complex, involved in the export of mRNAs to the cytoplasm through the nuclear pores. The protein is Centrin-3 (Cetn3) of Mus musculus (Mouse).